We begin with the raw amino-acid sequence, 387 residues long: Protein-glutamate methylesterase/protein-glutamine glutaminase 1 (387 aa).

In terms of domain architecture, Response regulatory spans 18 to 136 (RVMVVDDSAV…EISGGTDFRH (119 aa)). Position 69 is a 4-aspartylphosphate (aspartate 69). Residues 190–387 (PAAEERPDII…AYVLRSANKR (198 aa)) enclose the CheB-type methylesterase domain. Residues serine 204, histidine 233, and aspartate 329 contribute to the active site.

It belongs to the CheB family. Post-translationally, phosphorylated by CheA. Phosphorylation of the N-terminal regulatory domain activates the methylesterase activity.

It localises to the cytoplasm. The enzyme catalyses [protein]-L-glutamate 5-O-methyl ester + H2O = L-glutamyl-[protein] + methanol + H(+). It carries out the reaction L-glutaminyl-[protein] + H2O = L-glutamyl-[protein] + NH4(+). Involved in chemotaxis. Part of a chemotaxis signal transduction system that modulates chemotaxis in response to various stimuli. Catalyzes the demethylation of specific methylglutamate residues introduced into the chemoreceptors (methyl-accepting chemotaxis proteins or MCP) by CheR. Also mediates the irreversible deamidation of specific glutamine residues to glutamic acid. The sequence is that of Protein-glutamate methylesterase/protein-glutamine glutaminase 1 from Rhodospirillum rubrum (strain ATCC 11170 / ATH 1.1.1 / DSM 467 / LMG 4362 / NCIMB 8255 / S1).